The following is a 252-amino-acid chain: Trypsin iota (252 aa).

Residues 1 to 19 (MAVYGIVATVLVLLLLGDA) form the signal peptide. A propeptide spans 20–27 (SDVEATGR) (activation peptide). The region spanning 28-250 (IIGGSDQLIR…LRPWIVKAAN (223 aa)) is the Peptidase S1 domain. An intrachain disulfide couples Cys-53 to Cys-69. Catalysis depends on charge relay system residues His-68 and Asp-113. 2 cysteine pairs are disulfide-bonded: Cys-175–Cys-193 and Cys-202–Cys-226. Residue Ser-206 is the Charge relay system of the active site.

The protein belongs to the peptidase S1 family.

The protein localises to the secreted. It localises to the extracellular space. It carries out the reaction Preferential cleavage: Arg-|-Xaa, Lys-|-Xaa.. In Drosophila melanogaster (Fruit fly), this protein is Trypsin iota (iotaTry).